Reading from the N-terminus, the 75-residue chain is Molt-inhibiting hormone (75 aa).

Disulfide bonds link C7–C44, C24–C40, and C27–C53. A75 is subject to Alanine amide.

The protein belongs to the arthropod CHH/MIH/GIH/VIH hormone family.

The protein resides in the secreted. Inhibits Y-organs where molting hormone (ecdysteroid) is secreted. A molting cycle is initiated when MIH secretion diminishes or stops. The chain is Molt-inhibiting hormone from Procambarus clarkii (Red swamp crayfish).